We begin with the raw amino-acid sequence, 431 residues long: MASWLQIPKNSPFSLANIPFGIISSAKITSPVAAVAVGDYALNLSIFASSGGFSQLPVIQPHLGVFSQPTLNAFAALGRPVHRQVREYIQSVFRADTPFPQILKDNSTLQKEALLPLSEVTNHLPMHIGDYTDFYAGLNHAYNVGVLFRGPENALQPNYKHLPVGYHGRASSVVTSGTPIRRPNGQILANPAANPKVPTFSPCKRLDIELELAAFVSKSNELGKPVSIDEAEDHIFGVVLMNDWSARDIQAWEYVPLGPFNAKNFATTITPWVVLLDALEPFRTAGLEPGNRESLLPYLREKRELNAYDIPLEVEITNAGGKPTLISRTNAKNLLYSFPQMLAHHTITGCNMNTGDLLGSGTISGKENQTQGSLLEQTNGKNPLKLADGSERLFLEDGDTVVLRGMAGTEGNYVGFGDCVGTILPALKLEF.

Position 133 (aspartate 133) interacts with Ca(2+). Tyrosine 135 contributes to the substrate binding site. The Proton acceptor role is filled by histidine 140. Arginine 149 contacts substrate. 3 residues coordinate Ca(2+): glutamate 209, glutamate 211, and aspartate 243. Mg(2+) is bound at residue aspartate 243. Substrate is bound by residues glutamine 250 and tyrosine 254. Lysine 263 and threonine 267 together coordinate Mg(2+). Threonine 362 serves as a coordination point for substrate. The span at threonine 362–lysine 381 shows a compositional bias: polar residues. The segment at threonine 362–asparagine 382 is disordered.

This sequence belongs to the FAH family. It depends on Ca(2+) as a cofactor. Mg(2+) is required as a cofactor.

The enzyme catalyses 4-fumarylacetoacetate + H2O = acetoacetate + fumarate + H(+). It functions in the pathway amino-acid degradation; L-phenylalanine degradation; acetoacetate and fumarate from L-phenylalanine: step 6/6. Fumarylacetoacetase; part of the L-tyrosine degradation gene cluster that mediates the biosynthesis of the brownish pigment pyomelanin as an alternative melanin. The 4-hydroxyphenylpyruvate dioxygenase hppD catalyzes the conversion of 4-hydroxyphenylpyruvate to homogentisic acid (HGA). The protein hmgX is crucial for this conversion and thus, probably functions as an accessory factor to mediate specific activity of hppD. The homogentisate 1,2-dioxygenase hmgA is then involved in the cleavage of the aromatic ring of HGA and its conversion to 4-maleylacetoacetate. When hmgA activity is lowered by the cell wall integrity (CWI) signaling pathway, HGA accumulates and leads to the production of pyomelanin through benzoquinone acetic acid after oxidation and polymerization. On the opposite, in non-stress conditions, both hppD and hmgA activities are balanced and HGA is degraded into 4-maleylacetoacetate. 4-maleylacetoacetate is further converted to 4-fumarylacetoacetate by the maleylacetoacetate isomerase maiA, which is degraded into fumarate and acetoacetate by the fumarylacetoacetase fahA. The protein is Fumarylacetoacetase fahA of Aspergillus fumigatus (strain ATCC MYA-4609 / CBS 101355 / FGSC A1100 / Af293) (Neosartorya fumigata).